The sequence spans 114 residues: Large ribosomal subunit protein eL30 (114 aa).

The protein belongs to the eukaryotic ribosomal protein eL30 family.

The chain is Large ribosomal subunit protein eL30 (RPL30) from Branchiostoma belcheri (Amphioxus).